The sequence spans 150 residues: MTNELNSLDIKEIMDLLPHRYPFLLVDRVLDYVPGKRLHGIKNISFNEPQFTGHFPDTPIYPGVMILESLAQATGVLAFATYGKPAVNELYFLASMDKVRFRRPVIPGDVLDLEVIYLKDRRGMGKFECVAKVDGQVACEAMIMCARREI.

His54 is a catalytic residue.

The protein belongs to the thioester dehydratase family. FabZ subfamily.

Its subcellular location is the cytoplasm. It carries out the reaction a (3R)-hydroxyacyl-[ACP] = a (2E)-enoyl-[ACP] + H2O. Functionally, involved in unsaturated fatty acids biosynthesis. Catalyzes the dehydration of short chain beta-hydroxyacyl-ACPs and long chain saturated and unsaturated beta-hydroxyacyl-ACPs. This chain is 3-hydroxyacyl-[acyl-carrier-protein] dehydratase FabZ, found in Psychromonas ingrahamii (strain DSM 17664 / CCUG 51855 / 37).